The chain runs to 287 residues: 2-dehydro-3-deoxyphosphooctonate aldolase (287 aa).

Belongs to the KdsA family.

The protein resides in the cytoplasm. The enzyme catalyses D-arabinose 5-phosphate + phosphoenolpyruvate + H2O = 3-deoxy-alpha-D-manno-2-octulosonate-8-phosphate + phosphate. Its pathway is carbohydrate biosynthesis; 3-deoxy-D-manno-octulosonate biosynthesis; 3-deoxy-D-manno-octulosonate from D-ribulose 5-phosphate: step 2/3. The protein operates within bacterial outer membrane biogenesis; lipopolysaccharide biosynthesis. In Magnetococcus marinus (strain ATCC BAA-1437 / JCM 17883 / MC-1), this protein is 2-dehydro-3-deoxyphosphooctonate aldolase.